A 241-amino-acid polypeptide reads, in one-letter code: Transcription factor HEC1 (241 aa).

One can recognise a bHLH domain in the interval 128 to 177 (ISKDPQSVAARHRRERISERIRILQRLVPGGTKMDTASMLDEAIHYVKFL).

In terms of assembly, homodimer. Interacts with SPT. Interacts with BZIP30. In terms of tissue distribution, flowers, especially in gynoecium.

Its subcellular location is the nucleus. In terms of biological role, required for the female reproductive tract development and fertility. This Arabidopsis thaliana (Mouse-ear cress) protein is Transcription factor HEC1 (HEC1).